The sequence spans 367 residues: UDP-N-acetylglucosamine--N-acetylmuramyl-(pentapeptide) pyrophosphoryl-undecaprenol N-acetylglucosamine transferase (367 aa).

Residues 15–17 (TGG), Asn126, Arg169, Ser197, and Gln298 each bind UDP-N-acetyl-alpha-D-glucosamine.

The protein belongs to the glycosyltransferase 28 family. MurG subfamily.

Its subcellular location is the cell inner membrane. It catalyses the reaction di-trans,octa-cis-undecaprenyl diphospho-N-acetyl-alpha-D-muramoyl-L-alanyl-D-glutamyl-meso-2,6-diaminopimeloyl-D-alanyl-D-alanine + UDP-N-acetyl-alpha-D-glucosamine = di-trans,octa-cis-undecaprenyl diphospho-[N-acetyl-alpha-D-glucosaminyl-(1-&gt;4)]-N-acetyl-alpha-D-muramoyl-L-alanyl-D-glutamyl-meso-2,6-diaminopimeloyl-D-alanyl-D-alanine + UDP + H(+). It participates in cell wall biogenesis; peptidoglycan biosynthesis. Its function is as follows. Cell wall formation. Catalyzes the transfer of a GlcNAc subunit on undecaprenyl-pyrophosphoryl-MurNAc-pentapeptide (lipid intermediate I) to form undecaprenyl-pyrophosphoryl-MurNAc-(pentapeptide)GlcNAc (lipid intermediate II). The polypeptide is UDP-N-acetylglucosamine--N-acetylmuramyl-(pentapeptide) pyrophosphoryl-undecaprenol N-acetylglucosamine transferase (Bradyrhizobium sp. (strain ORS 278)).